A 76-amino-acid polypeptide reads, in one-letter code: MARFFRRRKFCRFTAEGVKEIDYKDLDTLKGYITETGKIVPSRITGTKARYQRQLATAIKRARYIAILPYTDSHFN.

The protein belongs to the bacterial ribosomal protein bS18 family. In terms of assembly, part of the 30S ribosomal subunit. Forms a tight heterodimer with protein bS6.

Functionally, binds as a heterodimer with protein bS6 to the central domain of the 16S rRNA, where it helps stabilize the platform of the 30S subunit. The protein is Small ribosomal subunit protein bS18 of Marinomonas sp. (strain MWYL1).